The sequence spans 216 residues: Thiopurine S-methyltransferase (216 aa).

S-adenosyl-L-methionine-binding residues include Trp-10, Leu-45, Glu-66, and Arg-123.

It belongs to the class I-like SAM-binding methyltransferase superfamily. TPMT family.

The protein resides in the cytoplasm. It carries out the reaction S-adenosyl-L-methionine + a thiopurine = S-adenosyl-L-homocysteine + a thiopurine S-methylether.. The chain is Thiopurine S-methyltransferase from Pseudomonas putida (strain ATCC 47054 / DSM 6125 / CFBP 8728 / NCIMB 11950 / KT2440).